A 403-amino-acid chain; its full sequence is Lipase lipl-5 (403 aa).

The signal sequence occupies residues 1-18 (MWRFAVFLAAFFVQDVVG). Residue N64 is glycosylated (N-linked (GlcNAc...) asparagine). S167 acts as the Nucleophile in catalysis. N271 is a glycosylation site (N-linked (GlcNAc...) asparagine). Active-site charge relay system residues include D343 and H375.

This sequence belongs to the AB hydrolase superfamily. Lipase family.

It localises to the lysosome lumen. The protein localises to the secreted. Its function is as follows. Lipase involved in lipid homeostasis. Regulates mitochondrial lipid composition, in particular cardiolipins and coenzyme Q-9 levels, in response to nutrient availability. Does not affect global triglyceride levels in response to nutrient availability. However, in coelomocytes, specifically promotes triglyceride catabolism and lifespan extension in response to nutrient deprivation. The chain is Lipase lipl-5 from Caenorhabditis elegans.